Reading from the N-terminus, the 156-residue chain is MSRRHSAEKREVLPDPKFGNVVITKFMNSIMYAGKKSVAESIVYGALDLIEAKTKQGPLTVFEQALENVMPTIEVRSRRVGGATYQVPVEVRSTRRQALGIRWLITAARGRNEKTMTERLSAELLDASNNRGSAVKKREDVHKMAEANRAFSHYRW.

It belongs to the universal ribosomal protein uS7 family. As to quaternary structure, part of the 30S ribosomal subunit. Contacts proteins S9 and S11.

In terms of biological role, one of the primary rRNA binding proteins, it binds directly to 16S rRNA where it nucleates assembly of the head domain of the 30S subunit. Is located at the subunit interface close to the decoding center, probably blocks exit of the E-site tRNA. In Nitrobacter winogradskyi (strain ATCC 25391 / DSM 10237 / CIP 104748 / NCIMB 11846 / Nb-255), this protein is Small ribosomal subunit protein uS7.